Reading from the N-terminus, the 314-residue chain is Taste receptor type 2 member 42 (314 aa).

The Extracellular portion of the chain corresponds to 1–7 (MATELDK). Residues 8-28 (IFLILEIAEFIIGMLGNVFIG) form a helical membrane-spanning segment. Over 29–50 (LVNCSEGIKNQKVFSADFILTC) the chain is Cytoplasmic. A helical membrane pass occupies residues 51–71 (LAISTIGQLFVILFDSFLVGL). The Extracellular segment spans residues 72–101 (ASHLYTTYRLGKPVIMLWHMTNHLTTWLAT). Residues 102-122 (CLSIFYFFKIAHFPHSLFLWL) traverse the membrane as a helical segment. At 123 to 127 (RWRMN) the chain is on the cytoplasmic side. The chain crosses the membrane as a helical span at residues 128-148 (GMIVMLLILSLFLLIFDSLVL). Over 149–187 (EIFIDISLNIIDKSNLTLYLDESKTLYDKLSILKTLLSL) the chain is Extracellular. Asn-163 is a glycosylation site (N-linked (GlcNAc...) asparagine). The chain crosses the membrane as a helical span at residues 188–208 (TSFIPFSLSLTSLLFFFLSLV). Over 209 to 238 (RHTRNLKLSSLGSRDSSTEAHRRAMKMVMS) the chain is Cytoplasmic. The helical transmembrane segment at 239-259 (FLFLFIVHFFSLQVANWIFFM) threads the bilayer. Over 260 to 265 (LWNNKY) the chain is Extracellular. Residues 266-286 (IKFAMLALNAFPSCHSFILIL) form a helical membrane-spanning segment. The Cytoplasmic portion of the chain corresponds to 287–314 (GNSKLRQTAVRLLWHLRNYTKTPNALPL).

The protein belongs to the G-protein coupled receptor T2R family.

It is found in the membrane. Functionally, receptor that may play a role in the perception of bitterness and is gustducin-linked. May play a role in sensing the chemical composition of the gastrointestinal content. The activity of this receptor may stimulate alpha gustducin, mediate PLC-beta-2 activation and lead to the gating of TRPM5. In Pan paniscus (Pygmy chimpanzee), this protein is Taste receptor type 2 member 42 (TAS2R42).